We begin with the raw amino-acid sequence, 407 residues long: Tryptophan synthase beta chain (407 aa).

The residue at position 91 (lysine 91) is an N6-(pyridoxal phosphate)lysine.

Belongs to the TrpB family. As to quaternary structure, tetramer of two alpha and two beta chains. Requires pyridoxal 5'-phosphate as cofactor.

The enzyme catalyses (1S,2R)-1-C-(indol-3-yl)glycerol 3-phosphate + L-serine = D-glyceraldehyde 3-phosphate + L-tryptophan + H2O. The protein operates within amino-acid biosynthesis; L-tryptophan biosynthesis; L-tryptophan from chorismate: step 5/5. Its function is as follows. The beta subunit is responsible for the synthesis of L-tryptophan from indole and L-serine. In Streptococcus pneumoniae (strain Hungary19A-6), this protein is Tryptophan synthase beta chain.